We begin with the raw amino-acid sequence, 376 residues long: Beta sliding clamp (376 aa).

Belongs to the beta sliding clamp family. As to quaternary structure, forms a ring-shaped head-to-tail homodimer around DNA which binds and tethers DNA polymerases and other proteins to the DNA. The DNA replisome complex has a single clamp-loading complex (3 tau and 1 each of delta, delta', psi and chi subunits) which binds 3 Pol III cores (1 core on the leading strand and 2 on the lagging strand) each with a beta sliding clamp dimer. Additional proteins in the replisome are other copies of gamma, psi and chi, Ssb, DNA helicase and RNA primase.

The protein resides in the cytoplasm. In terms of biological role, confers DNA tethering and processivity to DNA polymerases and other proteins. Acts as a clamp, forming a ring around DNA (a reaction catalyzed by the clamp-loading complex) which diffuses in an ATP-independent manner freely and bidirectionally along dsDNA. Initially characterized for its ability to contact the catalytic subunit of DNA polymerase III (Pol III), a complex, multichain enzyme responsible for most of the replicative synthesis in bacteria; Pol III exhibits 3'-5' exonuclease proofreading activity. The beta chain is required for initiation of replication as well as for processivity of DNA replication. The polypeptide is Beta sliding clamp (dnaN) (Streptomyces coelicolor (strain ATCC BAA-471 / A3(2) / M145)).